The chain runs to 469 residues: UDP-N-acetylmuramate--L-alanine ligase (469 aa).

119-125 (GTHGKTT) contributes to the ATP binding site.

The protein belongs to the MurCDEF family.

The protein localises to the cytoplasm. It catalyses the reaction UDP-N-acetyl-alpha-D-muramate + L-alanine + ATP = UDP-N-acetyl-alpha-D-muramoyl-L-alanine + ADP + phosphate + H(+). It functions in the pathway cell wall biogenesis; peptidoglycan biosynthesis. Cell wall formation. In Ruthia magnifica subsp. Calyptogena magnifica, this protein is UDP-N-acetylmuramate--L-alanine ligase.